The chain runs to 352 residues: Photosystem II D2 protein (352 aa).

The residue at position 2 (Thr2) is an N-acetylthreonine. Thr2 is subject to Phosphothreonine. Residues 40-60 (CAYFALGGWLTGTTFVSSWYT) traverse the membrane as a helical segment. Residue His117 participates in chlorophyll a binding. Residues 124 to 140 (GFMLRQFEIARAVQIRP) traverse the membrane as a helical segment. Pheophytin a-binding residues include Gln129 and Asn142. The helical transmembrane segment at 152–165 (VFVSVFLIYPLGQS) threads the bilayer. Position 197 (His197) interacts with chlorophyll a. A helical membrane pass occupies residues 207–227 (AALLCAIHGATVENTLFEDGD). Positions 214 and 261 each coordinate a plastoquinone. His214 provides a ligand contact to Fe cation. A Fe cation-binding site is contributed by His268. Residues 278-294 (GLWMSALGVVGLALNLR) traverse the membrane as a helical segment.

This sequence belongs to the reaction center PufL/M/PsbA/D family. PSII is composed of 1 copy each of membrane proteins PsbA, PsbB, PsbC, PsbD, PsbE, PsbF, PsbH, PsbI, PsbJ, PsbK, PsbL, PsbM, PsbT, PsbX, PsbY, PsbZ, Psb30/Ycf12, at least 3 peripheral proteins of the oxygen-evolving complex and a large number of cofactors. It forms dimeric complexes. Requires The D1/D2 heterodimer binds P680, chlorophylls that are the primary electron donor of PSII, and subsequent electron acceptors. It shares a non-heme iron and each subunit binds pheophytin, quinone, additional chlorophylls, carotenoids and lipids. There is also a Cl(-1) ion associated with D1 and D2, which is required for oxygen evolution. The PSII complex binds additional chlorophylls, carotenoids and specific lipids. as cofactor.

Its subcellular location is the plastid. The protein resides in the chloroplast thylakoid membrane. It catalyses the reaction 2 a plastoquinone + 4 hnu + 2 H2O = 2 a plastoquinol + O2. Photosystem II (PSII) is a light-driven water:plastoquinone oxidoreductase that uses light energy to abstract electrons from H(2)O, generating O(2) and a proton gradient subsequently used for ATP formation. It consists of a core antenna complex that captures photons, and an electron transfer chain that converts photonic excitation into a charge separation. The D1/D2 (PsbA/PsbD) reaction center heterodimer binds P680, the primary electron donor of PSII as well as several subsequent electron acceptors. D2 is needed for assembly of a stable PSII complex. In Ostreococcus tauri, this protein is Photosystem II D2 protein.